A 256-amino-acid chain; its full sequence is Late embryogenesis abundant protein 32 (256 aa).

Residues Met1–Lys14 are compositionally biased toward basic and acidic residues. Residues Met1–Glu20 are disordered. The Nuclear localization signal (NLS) signature appears at Gln5–Pro9. 3 consecutive SMP domains span residues Val13 to Ile66, Ile130 to Thr187, and Ile195 to Arg253.

Belongs to the LEA type SMP family. In terms of tissue distribution, embryo specific, only in dry mature seeds. Expressed at low levels.

It is found in the cytoplasm. The protein resides in the nucleus. LEA proteins are late embryonic proteins abundant in higher plant seed embryos. The function of those proteins is not known. This is Late embryogenesis abundant protein 32 from Arabidopsis thaliana (Mouse-ear cress).